A 238-amino-acid chain; its full sequence is Transcriptional activator protein AnoR (238 aa).

The HTH luxR-type domain occupies 170 to 236 (EFSQFNLYLT…SAAIRAVMLG (67 aa)). Residues 195–214 (SAEIAQIIGVTERTVNFHLC) constitute a DNA-binding region (H-T-H motif).

It belongs to the autoinducer-regulated transcriptional regulatory protein family.

Its function is as follows. Positively regulates the expression of anoI. Required for biofilm formation and motility. Probably part of a quorum-sensing system with AnoI. The polypeptide is Transcriptional activator protein AnoR (Acinetobacter nosocomialis).